Here is a 606-residue protein sequence, read N- to C-terminus: MPHRIRILPEILTNKIAAGEVVERPASVVKELVENALDAGCGEIIVEIEGGGRRLIRITDDGCGMSREDALMALERHATSKIATDDDLFSLATLGFRGEALPSVASVSRFTLATRERGSIEGTEIYAEGGKIREVKACGMAEGTVVSVRNLFFNTPARLKFMKSVETEGGHVADLVTRLALSRPEVRFTCVSDGKTLFRALDGTLLDRVAALLGKTVASALHPVDLATEGVRVTGLVARPDVSRSAASHLYTYINGRFIRDRVVQHAILQAYRNFLERGRYPVVVLFIEVSPGEVDVNVHPTKHEVRFRQQGIVHDVIQGAVEETLRLTPWIRRSESPVAAPLAVPRPQQYVQGTGARQVEEVRELLENYRPAVAPHRPLFAPQPAPQPDREPPLPDSGSRMLDDTAVRRHGGYFSSLAVIGQYNASYILCQDGSDLVIIDQHAAHERVAFERLKTQFAAGRVEGQGLLFPETVELSHRESAVVREHGGELGRLGFDLEDFGGTTWIVKGIPRLLAGTDYLRLLRDTLEELQSLGASRSIADAVEDILTRVACHSVVRGEHPLTTGEIEALFAHMDATDFSTNCPHGRPVLQRLTLGEVEKMFKRV.

A disordered region spans residues 377-401 (HRPLFAPQPAPQPDREPPLPDSGSR).

It belongs to the DNA mismatch repair MutL/HexB family.

Functionally, this protein is involved in the repair of mismatches in DNA. It is required for dam-dependent methyl-directed DNA mismatch repair. May act as a 'molecular matchmaker', a protein that promotes the formation of a stable complex between two or more DNA-binding proteins in an ATP-dependent manner without itself being part of a final effector complex. The polypeptide is DNA mismatch repair protein MutL (Geobacter sulfurreducens (strain ATCC 51573 / DSM 12127 / PCA)).